The sequence spans 299 residues: Pyridoxal 5'-phosphate synthase subunit PdxS (299 aa).

Aspartate 29 is a binding site for D-ribose 5-phosphate. Residue lysine 86 is the Schiff-base intermediate with D-ribose 5-phosphate of the active site. Glycine 158 is a D-ribose 5-phosphate binding site. Arginine 170 is a binding site for D-glyceraldehyde 3-phosphate. Residues glycine 219 and 240–241 (GS) each bind D-ribose 5-phosphate.

The protein belongs to the PdxS/SNZ family. In terms of assembly, in the presence of PdxT, forms a dodecamer of heterodimers.

It carries out the reaction aldehydo-D-ribose 5-phosphate + D-glyceraldehyde 3-phosphate + L-glutamine = pyridoxal 5'-phosphate + L-glutamate + phosphate + 3 H2O + H(+). The protein operates within cofactor biosynthesis; pyridoxal 5'-phosphate biosynthesis. Catalyzes the formation of pyridoxal 5'-phosphate from ribose 5-phosphate (RBP), glyceraldehyde 3-phosphate (G3P) and ammonia. The ammonia is provided by the PdxT subunit. Can also use ribulose 5-phosphate and dihydroxyacetone phosphate as substrates, resulting from enzyme-catalyzed isomerization of RBP and G3P, respectively. The chain is Pyridoxal 5'-phosphate synthase subunit PdxS from Protochlamydia amoebophila (strain UWE25).